Consider the following 891-residue polypeptide: Protein translocase subunit SecA 1 (891 aa).

Residues Gln86, 104-108 (GEGKT), and Asp493 contribute to the ATP site. The segment covering 845 to 873 (KQVAKPIEASHGDGNRKKAPVVKEKEAGR) has biased composition (basic and acidic residues). Residues 845–891 (KQVAKPIEASHGDGNRKKAPVVKEKEAGRNDPCPCGSGKKYKKCCGE) are disordered. The Zn(2+) site is built by Cys877, Cys879, Cys888, and Cys889.

It belongs to the SecA family. As to quaternary structure, monomer and homodimer. Part of the essential Sec protein translocation apparatus which comprises SecA, SecYEG and auxiliary proteins SecDF. Other proteins may also be involved. Zn(2+) is required as a cofactor.

Its subcellular location is the cell membrane. The protein resides in the cytoplasm. The enzyme catalyses ATP + H2O + cellular proteinSide 1 = ADP + phosphate + cellular proteinSide 2.. Its function is as follows. Part of the Sec protein translocase complex. Interacts with the SecYEG preprotein conducting channel. Has a central role in coupling the hydrolysis of ATP to the transfer of proteins into and across the cell membrane, serving as an ATP-driven molecular motor driving the stepwise translocation of polypeptide chains across the membrane. The sequence is that of Protein translocase subunit SecA 1 from Alkaliphilus metalliredigens (strain QYMF).